Consider the following 257-residue polypeptide: 5-oxoprolinase subunit A (257 aa).

It belongs to the LamB/PxpA family. As to quaternary structure, forms a complex composed of PxpA, PxpB and PxpC.

The catalysed reaction is 5-oxo-L-proline + ATP + 2 H2O = L-glutamate + ADP + phosphate + H(+). Its function is as follows. Catalyzes the cleavage of 5-oxoproline to form L-glutamate coupled to the hydrolysis of ATP to ADP and inorganic phosphate. The sequence is that of 5-oxoprolinase subunit A from Pectobacterium atrosepticum (strain SCRI 1043 / ATCC BAA-672) (Erwinia carotovora subsp. atroseptica).